Consider the following 253-residue polypeptide: Transposase for insertion sequence element IS904 (253 aa).

Residues 90 to 253 (KATAPNKVWL…SPKDFEKYNS (164 aa)) enclose the Integrase catalytic domain.

Belongs to the transposase IS3/IS150/IS904 family.

Functionally, involved in the transposition of the insertion sequence. The sequence is that of Transposase for insertion sequence element IS904 (nisX1) from Lactococcus lactis subsp. lactis (strain IL1403) (Streptococcus lactis).